The following is a 228-amino-acid chain: Cytidylate kinase (228 aa).

11–19 (GPASAGKST) lines the ATP pocket.

The protein belongs to the cytidylate kinase family. Type 1 subfamily.

Its subcellular location is the cytoplasm. The enzyme catalyses CMP + ATP = CDP + ADP. It carries out the reaction dCMP + ATP = dCDP + ADP. The polypeptide is Cytidylate kinase (Limosilactobacillus reuteri (strain DSM 20016) (Lactobacillus reuteri)).